The primary structure comprises 316 residues: Serpentine receptor class delta-45 (316 aa).

A run of 7 helical transmembrane segments spans residues 8–28 (VFYPMFFILVIPSLILLIFII), 42–62 (ILLVTCISQIVAVTTNCLIQI), 91–111 (YFLTQTAVVISNVLIFLTIYL), 128–148 (VTFFILSPIFIALGAQTSLIL), 184–204 (IIITFVITGTILILPAVGLLL), 234–254 (LQVFLPLICYIPVFGSFLVLA), and 266–286 (FFSVLVMLPMLFDPYIILYSV).

It belongs to the nematode receptor-like protein srd family.

Its subcellular location is the membrane. The chain is Serpentine receptor class delta-45 (srd-45) from Caenorhabditis elegans.